Reading from the N-terminus, the 845-residue chain is G-type lectin S-receptor-like serine/threonine-protein kinase At1g11410 (845 aa).

A signal peptide spans 1–21 (MKFFFIFFIFLFSFLIQSCYS). Positions 22-147 (DNTILRSQSL…VTGKSFWESF (126 aa)) constitute a Bulb-type lectin domain. At 22 to 441 (DNTILRSQSL…NGNGASGKKR (420 aa)) the chain is on the extracellular side. Asn-82, Asn-103, Asn-185, Asn-231, and Asn-259 each carry an N-linked (GlcNAc...) asparagine glycan. Residues 283–321 (PEDKCDIYNHCGFNGYCDSTSTEKFECSCLPGYEPKTPR) enclose the EGF-like domain. Intrachain disulfides connect Cys-287/Cys-299 and Cys-293/Cys-309. In terms of domain architecture, PAN spans 341-424 (CNGKEGFAKL…SGQDFYLRVD (84 aa)). Residues Asn-357, Asn-366, and Asn-379 are each glycosylated (N-linked (GlcNAc...) asparagine). 2 disulfides stabilise this stretch: Cys-372–Cys-399 and Cys-376–Cys-382. Residues 442–462 (LVLILISLIAVVMLLLISFHC) traverse the membrane as a helical segment. Residues 463-845 (YLRKRRQRTQ…DVTLTDVQGR (383 aa)) are Cytoplasmic-facing. A Protein kinase domain is found at 523–808 (FAFQNKLGAG…DLPSPKHPAF (286 aa)). ATP contacts are provided by residues 529–537 (LGAGGFGPV) and Lys-551. Residues 612–629 (EQRAELDWPKRMGIIRGI) are caM-binding. The Proton acceptor role is filled by Asp-648. Residues 803–845 (PKHPAFTAGRRRNTKTGGSSDNWPSGETSSTINDVTLTDVQGR) are disordered. The span at 817–845 (KTGGSSDNWPSGETSSTINDVTLTDVQGR) shows a compositional bias: polar residues.

This sequence belongs to the protein kinase superfamily. Ser/Thr protein kinase family.

The protein resides in the cell membrane. The enzyme catalyses L-seryl-[protein] + ATP = O-phospho-L-seryl-[protein] + ADP + H(+). The catalysed reaction is L-threonyl-[protein] + ATP = O-phospho-L-threonyl-[protein] + ADP + H(+). This Arabidopsis thaliana (Mouse-ear cress) protein is G-type lectin S-receptor-like serine/threonine-protein kinase At1g11410.